Here is a 481-residue protein sequence, read N- to C-terminus: Bifunctional protein HldE (481 aa).

Residues 1-318 (MKVTLPDFRR…ENAIRGRAET (318 aa)) form a ribokinase region. 195 to 198 (NLSE) provides a ligand contact to ATP. Aspartate 264 is a catalytic residue. Residues 344–481 (MTNGIFDILH…KRRAGQRTVV (138 aa)) are cytidylyltransferase.

The protein in the N-terminal section; belongs to the carbohydrate kinase PfkB family. This sequence in the C-terminal section; belongs to the cytidylyltransferase family. As to quaternary structure, homodimer.

The catalysed reaction is D-glycero-beta-D-manno-heptose 7-phosphate + ATP = D-glycero-beta-D-manno-heptose 1,7-bisphosphate + ADP + H(+). It carries out the reaction D-glycero-beta-D-manno-heptose 1-phosphate + ATP + H(+) = ADP-D-glycero-beta-D-manno-heptose + diphosphate. It functions in the pathway nucleotide-sugar biosynthesis; ADP-L-glycero-beta-D-manno-heptose biosynthesis; ADP-L-glycero-beta-D-manno-heptose from D-glycero-beta-D-manno-heptose 7-phosphate: step 1/4. It participates in nucleotide-sugar biosynthesis; ADP-L-glycero-beta-D-manno-heptose biosynthesis; ADP-L-glycero-beta-D-manno-heptose from D-glycero-beta-D-manno-heptose 7-phosphate: step 3/4. Functionally, catalyzes the phosphorylation of D-glycero-D-manno-heptose 7-phosphate at the C-1 position to selectively form D-glycero-beta-D-manno-heptose-1,7-bisphosphate. In terms of biological role, catalyzes the ADP transfer from ATP to D-glycero-beta-D-manno-heptose 1-phosphate, yielding ADP-D-glycero-beta-D-manno-heptose. The polypeptide is Bifunctional protein HldE (Sodalis glossinidius (strain morsitans)).